The sequence spans 173 residues: NADH-quinone oxidoreductase subunit 6 (173 aa).

4 residues coordinate [4Fe-4S] cluster: C53, C54, C118, and C148.

Belongs to the complex I 20 kDa subunit family. NDH-1 is composed of at least 14 different subunits, Nqo1 to Nqo14. The complex has a L-shaped structure, with the hydrophobic arm (subunits Nqo7, Nqo8, Nqo10 to Nqo14) embedded in the inner membrane and the hydrophilic peripheral arm (subunits Nqo1 to Nqo6, Nqo9) protruding into the bacterial cytoplasm. The hydrophilic domain contains all the redox centers. Requires [4Fe-4S] cluster as cofactor.

The protein localises to the cell inner membrane. It carries out the reaction a quinone + NADH + 5 H(+)(in) = a quinol + NAD(+) + 4 H(+)(out). In terms of biological role, NDH-1 shuttles electrons from NADH, via FMN and iron-sulfur (Fe-S) centers, to quinones in the respiratory chain. The immediate electron acceptor for the enzyme in this species is believed to be ubiquinone. Couples the redox reaction to proton translocation (for every two electrons transferred, four hydrogen ions are translocated across the cytoplasmic membrane), and thus conserves the redox energy in a proton gradient. The sequence is that of NADH-quinone oxidoreductase subunit 6 (nqo6) from Paracoccus denitrificans.